A 459-amino-acid chain; its full sequence is Fibrinogen C domain-containing protein 1 (459 aa).

Residues 1–22 (MVHERWKTVGSASQLEDRPRDK) form a disordered region. The Cytoplasmic segment spans residues 1 to 33 (MVHERWKTVGSASQLEDRPRDKPQRASCSYVLC). Residues 34–54 (TVLLSLAVLLAVAVTGVVLFL) traverse the membrane as a helical; Signal-anchor for type II membrane protein segment. At 55 to 459 (NHTHTPGTAP…MKIRPVREDR (405 aa)) the chain is on the extracellular side. Residues 233–456 (CANGSRPRDC…FSEMKIRPVR (224 aa)) enclose the Fibrinogen C-terminal domain. A disulfide bond links C242 and C271. N338 is a glycosylation site (N-linked (GlcNAc...) asparagine). Ca(2+) is bound by residues D391 and D393. C399 and C412 are oxidised to a cystine.

As to quaternary structure, homotetramer; disulfide-linked.

It localises to the membrane. Functionally, acetyl group-binding receptor which shows a high-affinity and calcium-dependent binding to acetylated structures such as chitin, some N-acetylated carbohydrates, and amino acids, but not to their non-acetylated counterparts. Can facilitate the endocytosis of acetylated components. The chain is Fibrinogen C domain-containing protein 1 (Fibcd1) from Mus musculus (Mouse).